Reading from the N-terminus, the 463-residue chain is Aurantioclavine synthase cnsA (463 aa).

One can recognise an FAD-binding PCMH-type domain in the interval 16 to 199 (ERFNQRGNVF…TQATVRVFPD (184 aa)).

Belongs to the oxygen-dependent FAD-linked oxidoreductase family. It depends on FAD as a cofactor.

The protein operates within alkaloid biosynthesis. Functionally, FAD-linked oxidoreductase; part of the gene cluster that mediates the biosynthesis of communesins, a prominent class of indole alkaloids with great potential as pharmaceuticals. Communesins are biosynthesized by the coupling of tryptamine and aurantioclavine, two building blocks derived from L-tryptophan. The L-tryptophan decarboxylase cnsB converts L-tryptophan to tryptamine, whereas the tryptophan dimethylallyltransferase cnsF converts L-tryptophan to 4-dimethylallyl tryptophan which is further transformed to aurantioclavine by the aurantioclavine synthase cnsA, probably aided by the catalase cnsD. The cytochrome P450 monooxygenase cnsC catalyzes the heterodimeric coupling between the two different indole moieties, tryptamine and aurantioclavine, to construct vicinal quaternary stereocenters and yield the heptacyclic communesin scaffold. The O-methyltransferase cnsE then methylates the communesin scaffold to produce communesin K, the simplest characterized communesin that contains the heptacyclic core. The dioxygenase cnsJ converts communesin K into communesin I. Acylation to introduce the hexadienyl group at position N16 of communesin I by the acyltransferase cnsK leads to the production of communesin B. The hexadienyl group is produced by the highly reducing polyketide synthase cnsI, before being hydrolytically removed from cnsI by the serine hydrolase cnsH, converted into hexadienyl-CoA by the CoA ligase cnsG, and then transferred to communesin I by cnsK. Surprisingly, cnsK may also be a promiscuous acyltransferase that can tolerate a range of acyl groups, including acetyl-, propionyl-, and butyryl-CoA, which lead to communesins A, G and H respectively. The roles of the alpha-ketoglutarate-dependent dioxygenases cnsM and cnsP have still to be determined. This chain is Aurantioclavine synthase cnsA, found in Penicillium expansum (Blue mold rot fungus).